We begin with the raw amino-acid sequence, 29 residues long: U1-pseudomyrmecitoxin-Pt1 subunit SS1 (29 aa).

The protein belongs to the myrmexin family. As to quaternary structure, heterodimer composed of subunit SS1 and subunit LS1 (U1-PSDTX-Pt1b), and heterodimer composed of subunit SS1 and LS2 (U1-PSDTX-Pt1a); disulfide-linked. As to expression, expressed by the venom gland.

Its subcellular location is the secreted. This heterodimer may have anti-inflammatory properties, since the myrmexin complex (composed of 6 SS-LS heterodimers) inhibits carrageenin-induced edema in a dose-dependent manner (after subcutaneous injection into rats). In Pseudomyrmex triplarinus (Ant), this protein is U1-pseudomyrmecitoxin-Pt1 subunit SS1.